The following is a 295-amino-acid chain: Peptide transport system permease protein SapC (295 aa).

The next 6 membrane-spanning stretches (helical) occupy residues 27–47 (IALF…FASY), 102–122 (LLVV…AGLL), 129–149 (FVGH…AVVI), 157–177 (LWNA…HTIY), 219–239 (VARA…ISLG), and 262–282 (PWTV…SIIF). The region spanning 98-278 (LGSALLVVFS…GFAIIFTILL (181 aa)) is the ABC transmembrane type-1 domain.

This sequence belongs to the binding-protein-dependent transport system permease family. OppBC subfamily.

Its subcellular location is the cell inner membrane. Involved in a peptide intake transport system that plays a role in the resistance to antimicrobial peptides. The protein is Peptide transport system permease protein SapC (sapC) of Haemophilus influenzae (strain ATCC 51907 / DSM 11121 / KW20 / Rd).